The primary structure comprises 430 residues: Adenylosuccinate synthetase (430 aa).

Residues 13-19 and 41-43 each bind GTP; these read GDEGKGK and GHT. Asp-14 serves as the catalytic Proton acceptor. Asp-14 and Gly-41 together coordinate Mg(2+). IMP-binding positions include 14 to 17, 39 to 42, Thr-130, Arg-144, Gln-225, Thr-240, and Arg-304; these read DEGK and NAGH. Residue His-42 is the Proton donor of the active site. Substrate is bound at residue 300 to 306; sequence STTGRAR. Residues Arg-306, 332–334, and 414–416 each bind GTP; these read KLD and STG.

It belongs to the adenylosuccinate synthetase family. As to quaternary structure, homodimer. Mg(2+) serves as cofactor.

Its subcellular location is the cytoplasm. The catalysed reaction is IMP + L-aspartate + GTP = N(6)-(1,2-dicarboxyethyl)-AMP + GDP + phosphate + 2 H(+). The protein operates within purine metabolism; AMP biosynthesis via de novo pathway; AMP from IMP: step 1/2. Plays an important role in the de novo pathway of purine nucleotide biosynthesis. Catalyzes the first committed step in the biosynthesis of AMP from IMP. The sequence is that of Adenylosuccinate synthetase from Pseudomonas putida (strain W619).